A 73-amino-acid chain; its full sequence is Sec-independent protein translocase protein TatA (73 aa).

The chain crosses the membrane as a helical span at residues 1 to 21 (MGSFSIGHWLIVLAIIVLLFG). A disordered region spans residues 43–73 (MEDTTPEKSEKVEHKEESATSQKIEETTKNA).

It belongs to the TatA/E family. The Tat system comprises two distinct complexes: a TatABC complex, containing multiple copies of TatA, TatB and TatC subunits, and a separate TatA complex, containing only TatA subunits. Substrates initially bind to the TatABC complex, which probably triggers association of the separate TatA complex to form the active translocon.

The protein resides in the cell inner membrane. Functionally, part of the twin-arginine translocation (Tat) system that transports large folded proteins containing a characteristic twin-arginine motif in their signal peptide across membranes. TatA could form the protein-conducting channel of the Tat system. In Campylobacter concisus (strain 13826), this protein is Sec-independent protein translocase protein TatA.